Reading from the N-terminus, the 297-residue chain is 4-diphosphocytidyl-2-C-methyl-D-erythritol kinase (297 aa).

The active site involves lysine 10. 95–105 contacts ATP; it reads PVAGGMAGGSA. The active site involves aspartate 137.

Belongs to the GHMP kinase family. IspE subfamily.

The catalysed reaction is 4-CDP-2-C-methyl-D-erythritol + ATP = 4-CDP-2-C-methyl-D-erythritol 2-phosphate + ADP + H(+). It functions in the pathway isoprenoid biosynthesis; isopentenyl diphosphate biosynthesis via DXP pathway; isopentenyl diphosphate from 1-deoxy-D-xylulose 5-phosphate: step 3/6. Functionally, catalyzes the phosphorylation of the position 2 hydroxy group of 4-diphosphocytidyl-2C-methyl-D-erythritol. The sequence is that of 4-diphosphocytidyl-2-C-methyl-D-erythritol kinase from Streptomyces avermitilis (strain ATCC 31267 / DSM 46492 / JCM 5070 / NBRC 14893 / NCIMB 12804 / NRRL 8165 / MA-4680).